We begin with the raw amino-acid sequence, 108 residues long: ATP synthase epsilon chain (108 aa).

The protein belongs to the ATPase epsilon chain family. In terms of assembly, F-type ATPases have 2 components, CF(1) - the catalytic core - and CF(0) - the membrane proton channel. CF(1) has five subunits: alpha(3), beta(3), gamma(1), delta(1), epsilon(1). CF(0) has three main subunits: a, b and c.

It localises to the cell inner membrane. Its function is as follows. Produces ATP from ADP in the presence of a proton gradient across the membrane. This is ATP synthase epsilon chain from Rickettsia bellii (strain OSU 85-389).